The following is a 194-amino-acid chain: Imidazoleglycerol-phosphate dehydratase (194 aa).

The protein belongs to the imidazoleglycerol-phosphate dehydratase family.

Its subcellular location is the cytoplasm. It carries out the reaction D-erythro-1-(imidazol-4-yl)glycerol 3-phosphate = 3-(imidazol-4-yl)-2-oxopropyl phosphate + H2O. It functions in the pathway amino-acid biosynthesis; L-histidine biosynthesis; L-histidine from 5-phospho-alpha-D-ribose 1-diphosphate: step 6/9. This Bacillus anthracis (strain A0248) protein is Imidazoleglycerol-phosphate dehydratase.